Consider the following 383-residue polypeptide: Chitinase-3-like protein 1 (383 aa).

The first 21 residues, 1-21 (MGLRVAQTGFVALVLLQSCAA), serve as a signal peptide directing secretion. The GH18 domain occupies 22–383 (YKLVCYYTSW…SAIKDVLAAA (362 aa)). C26 and C51 are oxidised to a cystine. N-linked (GlcNAc...) asparagine glycosylation occurs at N60. Residues 70 to 71 (EW), 97 to 100 (GGWN), Y141, 204 to 207 (LTYD), and R263 each bind chitin. Residues C300 and C364 are joined by a disulfide bond. Residues 324–338 (QWVGYDDQESVKNKA) form an important for AKT1 activation and IL8 production region. Chitin is bound at residue W352.

This sequence belongs to the glycosyl hydrolase 18 family. Monomer. In terms of tissue distribution, detected in smooth muscle cells in atherosclerotic plaques. Detected in regions of vascular occlusion in the aorta.

Its subcellular location is the secreted. The protein localises to the extracellular space. It localises to the cytoplasm. It is found in the perinuclear region. The protein resides in the endoplasmic reticulum. Functionally, carbohydrate-binding lectin with a preference for chitin. Has no chitinase activity. May play a role in tissue remodeling and in the capacity of cells to respond to and cope with changes in their environment. Plays a role in T-helper cell type 2 (Th2) inflammatory response and IL-13-induced inflammation, regulating allergen sensitization, inflammatory cell apoptosis, dendritic cell accumulation and M2 macrophage differentiation. Facilitates invasion of pathogenic enteric bacteria into colonic mucosa and lymphoid organs. Mediates activation of AKT1 signaling pathway and subsequent IL8 production in colonic epithelial cells. Regulates antibacterial responses in lung by contributing to macrophage bacterial killing, controlling bacterial dissemination and augmenting host tolerance. Also regulates hyperoxia-induced injury, inflammation and epithelial apoptosis in lung. Stimulates migration and adhesion of cultured vascular smooth muscle cells. The sequence is that of Chitinase-3-like protein 1 (CHI3L1) from Sus scrofa (Pig).